The following is a 187-amino-acid chain: Hypoxanthine/guanine phosphoribosyltransferase (187 aa).

The protein belongs to the purine/pyrimidine phosphoribosyltransferase family. Archaeal HPRT subfamily. In terms of assembly, homodimer.

It is found in the cytoplasm. The catalysed reaction is IMP + diphosphate = hypoxanthine + 5-phospho-alpha-D-ribose 1-diphosphate. It carries out the reaction GMP + diphosphate = guanine + 5-phospho-alpha-D-ribose 1-diphosphate. It participates in purine metabolism; IMP biosynthesis via salvage pathway; IMP from hypoxanthine: step 1/1. Functionally, catalyzes a salvage reaction resulting in the formation of IMP that is energically less costly than de novo synthesis. This chain is Hypoxanthine/guanine phosphoribosyltransferase, found in Ferroglobus placidus (strain DSM 10642 / AEDII12DO).